The following is a 631-amino-acid chain: KIF-binding protein (631 aa).

Residues Glu-60–Cys-70 are compositionally biased toward acidic residues. Residues Glu-60–Phe-88 are disordered.

It belongs to the KIF-binding protein family. As to expression, at 30 hpf, primarily expressed in central and peripheral neurons.

The protein localises to the cytoplasm. Its subcellular location is the cytoskeleton. Activator of KIF1B plus-end-directed microtubule motor activity. Required for organization of axonal microtubules, and axonal outgrowth and maintenance during peripheral and central nervous system development. This chain is KIF-binding protein (kifbp), found in Danio rerio (Zebrafish).